Here is a 433-residue protein sequence, read N- to C-terminus: Enolase (433 aa).

Q167 is a binding site for (2R)-2-phosphoglycerate. E209 serves as the catalytic Proton donor. Positions 246, 291, and 318 each coordinate Mg(2+). K343, R372, S373, and K394 together coordinate (2R)-2-phosphoglycerate. K343 acts as the Proton acceptor in catalysis.

It belongs to the enolase family. Component of the RNA degradosome, a multiprotein complex involved in RNA processing and mRNA degradation. Mg(2+) serves as cofactor.

The protein resides in the cytoplasm. Its subcellular location is the secreted. It is found in the cell surface. It carries out the reaction (2R)-2-phosphoglycerate = phosphoenolpyruvate + H2O. It functions in the pathway carbohydrate degradation; glycolysis; pyruvate from D-glyceraldehyde 3-phosphate: step 4/5. Its function is as follows. Catalyzes the reversible conversion of 2-phosphoglycerate (2-PG) into phosphoenolpyruvate (PEP). It is essential for the degradation of carbohydrates via glycolysis. The polypeptide is Enolase (Shewanella piezotolerans (strain WP3 / JCM 13877)).